We begin with the raw amino-acid sequence, 461 residues long: ATP synthase subunit beta (461 aa).

Glycine 151–threonine 158 is an ATP binding site.

The protein belongs to the ATPase alpha/beta chains family. In terms of assembly, F-type ATPases have 2 components, CF(1) - the catalytic core - and CF(0) - the membrane proton channel. CF(1) has five subunits: alpha(3), beta(3), gamma(1), delta(1), epsilon(1). CF(0) has three main subunits: a(1), b(2) and c(9-12). The alpha and beta chains form an alternating ring which encloses part of the gamma chain. CF(1) is attached to CF(0) by a central stalk formed by the gamma and epsilon chains, while a peripheral stalk is formed by the delta and b chains.

Its subcellular location is the cell inner membrane. It catalyses the reaction ATP + H2O + 4 H(+)(in) = ADP + phosphate + 5 H(+)(out). Functionally, produces ATP from ADP in the presence of a proton gradient across the membrane. The catalytic sites are hosted primarily by the beta subunits. The chain is ATP synthase subunit beta from Idiomarina loihiensis (strain ATCC BAA-735 / DSM 15497 / L2-TR).